Here is a 402-residue protein sequence, read N- to C-terminus: Protein kinase US3 homolog (402 aa).

Disordered regions lie at residues Met1–Asp21 and Phe46–Thr88. The Protein kinase domain maps to Tyr102–Phe386. Residues Leu108–Ile116 and Lys129 contribute to the ATP site. Asp218 serves as the catalytic Proton acceptor.

The protein belongs to the protein kinase superfamily. Ser/Thr protein kinase family. Post-translationally, phosphorylated by UL13 homolog; this phosphorylation regulates subsequent phosphorylation of UL31 and UL34 homologs by US3. Autophosphorylated.

The protein localises to the host cytoplasm. It localises to the host nucleus. The catalysed reaction is L-seryl-[protein] + ATP = O-phospho-L-seryl-[protein] + ADP + H(+). The enzyme catalyses L-threonyl-[protein] + ATP = O-phospho-L-threonyl-[protein] + ADP + H(+). In terms of biological role, multifunctional serine/threonine kinase that plays a role in several processes including egress of virus particles from the nucleus, modulation of the actin cytoskeleton and inhibition of apoptosis. Phosphorylates UL31 and UL34 homologs, two critical regulators of capsid budding from nucleus to endoplasmic reticulum, thereby facilitating virion egress. Modulates and redistributes host components of the nuclear envelope, including LMNA, emerin/EMD and the nuclear matrix protein MATR3. Phosphorylates envelope glycoprotein B (gB), probably to direct it to the cell surface. Promotes virus intracellular spread by restructuring host cell cytoskeleton. Blocks host apoptosis to extend cell survival and allow efficient viral replication. Promotes viral gene expression by phosphorylating host HDAC2 to reduce viral genome silencing. In Gallus gallus (Chicken), this protein is Protein kinase US3 homolog (MDV092).